We begin with the raw amino-acid sequence, 396 residues long: Ribosomal RNA large subunit methyltransferase I (396 aa).

In terms of domain architecture, PUA spans 2-81 (TVRLILAKGR…EVIDCAFFIR (80 aa)).

The protein belongs to the methyltransferase superfamily. RlmI family.

Its subcellular location is the cytoplasm. It carries out the reaction cytidine(1962) in 23S rRNA + S-adenosyl-L-methionine = 5-methylcytidine(1962) in 23S rRNA + S-adenosyl-L-homocysteine + H(+). Functionally, specifically methylates the cytosine at position 1962 (m5C1962) of 23S rRNA. The chain is Ribosomal RNA large subunit methyltransferase I from Yersinia pestis bv. Antiqua (strain Antiqua).